The following is a 201-amino-acid chain: Achaete-scute complex protein T5 (201 aa).

The segment covering 1–10 has biased composition (polar residues); sequence MALGSENHSV. The segment at 1–32 is disordered; it reads MALGSENHSVFNDDEESSSAFNGPSVIRRNAR. The bHLH domain maps to 24–90; that stretch reads PSVIRRNARE…KMAVEYIRRL (67 aa).

In terms of assembly, efficient DNA binding requires dimerization with another bHLH protein. As to expression, l(1)SC, SC and AC strongly label the presumptive stomatogastric nervous system, while ASE is more prominent in the presumptive procephalic lobe.

In terms of biological role, AS-C proteins are involved in the determination of the neuronal precursors in the peripheral nervous system and the central nervous system. The chain is Achaete-scute complex protein T5 (ac) from Drosophila melanogaster (Fruit fly).